Here is a 429-residue protein sequence, read N- to C-terminus: Ribosomal RNA small subunit methyltransferase B (429 aa).

S-adenosyl-L-methionine contacts are provided by residues 254 to 260 (CAAPGGK), Asp277, Asp303, and Asp322. The Nucleophile role is filled by Cys375.

The protein belongs to the class I-like SAM-binding methyltransferase superfamily. RsmB/NOP family.

The protein localises to the cytoplasm. It carries out the reaction cytidine(967) in 16S rRNA + S-adenosyl-L-methionine = 5-methylcytidine(967) in 16S rRNA + S-adenosyl-L-homocysteine + H(+). Functionally, specifically methylates the cytosine at position 967 (m5C967) of 16S rRNA. The sequence is that of Ribosomal RNA small subunit methyltransferase B from Shigella boydii serotype 18 (strain CDC 3083-94 / BS512).